The primary structure comprises 224 residues: ATP synthase subunit b (224 aa).

Residues 2–22 (TPSLGLIFWQSVIFLISFIIL) traverse the membrane as a helical segment.

The protein belongs to the ATPase B chain family. F-type ATPases have 2 components, F(1) - the catalytic core - and F(0) - the membrane proton channel. F(1) has five subunits: alpha(3), beta(3), gamma(1), delta(1), epsilon(1). F(0) has three main subunits: a(1), b(2) and c(10-14). The alpha and beta chains form an alternating ring which encloses part of the gamma chain. F(1) is attached to F(0) by a central stalk formed by the gamma and epsilon chains, while a peripheral stalk is formed by the delta and b chains.

Its subcellular location is the cell membrane. Functionally, f(1)F(0) ATP synthase produces ATP from ADP in the presence of a proton or sodium gradient. F-type ATPases consist of two structural domains, F(1) containing the extramembraneous catalytic core and F(0) containing the membrane proton channel, linked together by a central stalk and a peripheral stalk. During catalysis, ATP synthesis in the catalytic domain of F(1) is coupled via a rotary mechanism of the central stalk subunits to proton translocation. Component of the F(0) channel, it forms part of the peripheral stalk, linking F(1) to F(0). This chain is ATP synthase subunit b, found in Karelsulcia muelleri (strain GWSS) (Sulcia muelleri).